The chain runs to 488 residues: Lysine--tRNA ligase (488 aa).

Residues E397 and E404 each contribute to the Mg(2+) site.

Belongs to the class-II aminoacyl-tRNA synthetase family. In terms of assembly, homodimer. Mg(2+) serves as cofactor.

It localises to the cytoplasm. The catalysed reaction is tRNA(Lys) + L-lysine + ATP = L-lysyl-tRNA(Lys) + AMP + diphosphate. The polypeptide is Lysine--tRNA ligase (lysS) (Mycoplasmopsis fermentans (strain ATCC 19989 / NBRC 14854 / NCTC 10117 / PG18) (Mycoplasma fermentans)).